The chain runs to 733 residues: Alpha,alpha-trehalose-phosphate synthase [UDP-forming] A (733 aa).

In the N-terminal section; belongs to the glycosyltransferase 20 family. It in the C-terminal section; belongs to the trehalose phosphatase family.

The catalysed reaction is D-glucose 6-phosphate + UDP-alpha-D-glucose = alpha,alpha-trehalose 6-phosphate + UDP + H(+). Synthesizes trehalose 6-phosphate, the precursor for the production of trehalose, the main carbohydrate storage reserve of the dormant spore. Trehalose accumulates in both prestalk and prespore cells and then is rapidly metabolized during terminal differentiation of stalk cells, while being stored in spores, where it serves as the principal energy and carbon source for germination. In Dictyostelium discoideum (Social amoeba), this protein is Alpha,alpha-trehalose-phosphate synthase [UDP-forming] A (tpsA).